We begin with the raw amino-acid sequence, 141 residues long: Large ribosomal subunit protein uL11 (141 aa).

The protein belongs to the universal ribosomal protein uL11 family. As to quaternary structure, part of the ribosomal stalk of the 50S ribosomal subunit. Interacts with L10 and the large rRNA to form the base of the stalk. L10 forms an elongated spine to which L12 dimers bind in a sequential fashion forming a multimeric L10(L12)X complex. In terms of processing, one or more lysine residues are methylated.

Functionally, forms part of the ribosomal stalk which helps the ribosome interact with GTP-bound translation factors. This chain is Large ribosomal subunit protein uL11, found in Aliarcobacter butzleri (strain RM4018) (Arcobacter butzleri).